The primary structure comprises 1364 residues: DNA-directed RNA polymerase subunit beta' (1364 aa).

The tract at residues Met-1–His-42 is disordered. Residues Cys-250, Cys-317, Cys-324, and Cys-327 each coordinate Zn(2+).

The protein belongs to the RNA polymerase beta' chain family. RpoC2 subfamily. In terms of assembly, in cyanobacteria the RNAP catalytic core is composed of 2 alpha, 1 beta, 1 beta', 1 gamma and 1 omega subunit. When a sigma factor is associated with the core the holoenzyme is formed, which can initiate transcription. It depends on Zn(2+) as a cofactor.

It carries out the reaction RNA(n) + a ribonucleoside 5'-triphosphate = RNA(n+1) + diphosphate. Functionally, DNA-dependent RNA polymerase catalyzes the transcription of DNA into RNA using the four ribonucleoside triphosphates as substrates. This is DNA-directed RNA polymerase subunit beta' from Parasynechococcus marenigrum (strain WH8102).